An 844-amino-acid polypeptide reads, in one-letter code: Serrate RNA effector molecule homolog B (844 aa).

Disordered regions lie at residues 1 to 90, 277 to 401, 555 to 575, and 794 to 825; these read MADS…HGSD, EAAK…PRPL, ELLSSAGRTPETEAPKEGNPT, and PNPYGAGRGNYDSFRGQGMYPGKPRNRMMRGD. 2 stretches are compositionally biased toward basic and acidic residues: residues 16–73 and 277–337; these read FRRE…RHDI and EAAK…ETRK. Residues 349–359 show a composition bias toward acidic residues; the sequence is SDDGSDSESDT. Positions 376-397 are enriched in basic and acidic residues; sequence DTPKKEEETEKPKEKPKEDTVK.

The protein belongs to the ARS2 family. Interacts ncbp1/cbp80.

It localises to the nucleus. The protein resides in the nucleoplasm. The protein localises to the cytoplasm. In terms of biological role, acts as a mediator between the cap-binding complex (CBC) and the primary microRNAs (miRNAs) processing machinery during cell proliferation. Contributes to the stability and delivery of capped primary miRNA transcripts to the primary miRNA processing complex, thereby playing a role in RNA-mediated gene silencing (RNAi) by miRNAs. This is Serrate RNA effector molecule homolog B (srrt-b) from Xenopus laevis (African clawed frog).